The chain runs to 934 residues: Bifunctional uridylyltransferase/uridylyl-removing enzyme (934 aa).

Positions M1 to S379 are uridylyltransferase. The interval D380–T736 is uridylyl-removing. The HD domain maps to V496–M613. ACT domains are found at residues E737–A818 and V848–Q931.

It belongs to the GlnD family. The cofactor is Mg(2+).

The enzyme catalyses [protein-PII]-L-tyrosine + UTP = [protein-PII]-uridylyl-L-tyrosine + diphosphate. It catalyses the reaction [protein-PII]-uridylyl-L-tyrosine + H2O = [protein-PII]-L-tyrosine + UMP + H(+). Its activity is regulated as follows. Uridylyltransferase (UTase) activity is inhibited by glutamine, while glutamine activates uridylyl-removing (UR) activity. Functionally, modifies, by uridylylation and deuridylylation, the PII regulatory proteins (GlnB and homologs), in response to the nitrogen status of the cell that GlnD senses through the glutamine level. Under low glutamine levels, catalyzes the conversion of the PII proteins and UTP to PII-UMP and PPi, while under higher glutamine levels, GlnD hydrolyzes PII-UMP to PII and UMP (deuridylylation). Thus, controls uridylylation state and activity of the PII proteins, and plays an important role in the regulation of nitrogen assimilation and metabolism. The polypeptide is Bifunctional uridylyltransferase/uridylyl-removing enzyme (Brucella melitensis biotype 2 (strain ATCC 23457)).